The chain runs to 273 residues: Formamidopyrimidine-DNA glycosylase (273 aa).

The active-site Schiff-base intermediate with DNA is the P2. E3 (proton donor) is an active-site residue. K58 (proton donor; for beta-elimination activity) is an active-site residue. DNA contacts are provided by H91, R110, and R153. An FPG-type zinc finger spans residues 238 to 272; that stretch reads KVYGKEGQPCPRCGEDFVKIKICGRGTTYCLHCQK. R262 functions as the Proton donor; for delta-elimination activity in the catalytic mechanism.

The protein belongs to the FPG family. As to quaternary structure, monomer. It depends on Zn(2+) as a cofactor.

It catalyses the reaction Hydrolysis of DNA containing ring-opened 7-methylguanine residues, releasing 2,6-diamino-4-hydroxy-5-(N-methyl)formamidopyrimidine.. The enzyme catalyses 2'-deoxyribonucleotide-(2'-deoxyribose 5'-phosphate)-2'-deoxyribonucleotide-DNA = a 3'-end 2'-deoxyribonucleotide-(2,3-dehydro-2,3-deoxyribose 5'-phosphate)-DNA + a 5'-end 5'-phospho-2'-deoxyribonucleoside-DNA + H(+). Functionally, involved in base excision repair of DNA damaged by oxidation or by mutagenic agents. Acts as a DNA glycosylase that recognizes and removes damaged bases. Has a preference for oxidized purines, such as 7,8-dihydro-8-oxoguanine (8-oxoG). Has AP (apurinic/apyrimidinic) lyase activity and introduces nicks in the DNA strand. Cleaves the DNA backbone by beta-delta elimination to generate a single-strand break at the site of the removed base with both 3'- and 5'-phosphates. The polypeptide is Formamidopyrimidine-DNA glycosylase (Lactobacillus delbrueckii subsp. bulgaricus (strain ATCC BAA-365 / Lb-18)).